Reading from the N-terminus, the 708-residue chain is Polyribonucleotide nucleotidyltransferase (708 aa).

Mg(2+)-binding residues include Asp-488 and Asp-494. In terms of domain architecture, KH spans Pro-555–Ile-614. Residues Gly-624–Lys-692 enclose the S1 motif domain.

Belongs to the polyribonucleotide nucleotidyltransferase family. Component of the RNA degradosome, which is a multiprotein complex involved in RNA processing and mRNA degradation. Requires Mg(2+) as cofactor.

It localises to the cytoplasm. The enzyme catalyses RNA(n+1) + phosphate = RNA(n) + a ribonucleoside 5'-diphosphate. Functionally, involved in mRNA degradation. Catalyzes the phosphorolysis of single-stranded polyribonucleotides processively in the 3'- to 5'-direction. In Pseudoalteromonas translucida (strain TAC 125), this protein is Polyribonucleotide nucleotidyltransferase.